The chain runs to 282 residues: MILIDGKSLSKDLKERLVTQVQEYKHHTAITPKLVAIIVGNDPASKTYVDSKEKACAQVGIDSQVITLPEHTTESELLELIDQLNNDSSVHAILVQLPLPAHINKNNVIYSIKPEKDVDGFHPTNVGRLQLRDKKCLESCTPKGIMTMLREYGIKTEGAYAVVVGASNVVGKPVSQLLLNAKATVTTCHRFTTDLKSHTTKADILIVAVGKPNFITADMVKEGAVVIDVGINHVDGKIVGDVDFAAVKDKVAAITPVPGGVGPMTITELLYNTFQCAQELNR.

Residues 165–167 and Ile231 contribute to the NADP(+) site; that span reads GAS.

Belongs to the tetrahydrofolate dehydrogenase/cyclohydrolase family. As to quaternary structure, homodimer.

The enzyme catalyses (6R)-5,10-methylene-5,6,7,8-tetrahydrofolate + NADP(+) = (6R)-5,10-methenyltetrahydrofolate + NADPH. It catalyses the reaction (6R)-5,10-methenyltetrahydrofolate + H2O = (6R)-10-formyltetrahydrofolate + H(+). Its pathway is one-carbon metabolism; tetrahydrofolate interconversion. Catalyzes the oxidation of 5,10-methylenetetrahydrofolate to 5,10-methenyltetrahydrofolate and then the hydrolysis of 5,10-methenyltetrahydrofolate to 10-formyltetrahydrofolate. The polypeptide is Bifunctional protein FolD (Francisella tularensis subsp. mediasiatica (strain FSC147)).